We begin with the raw amino-acid sequence, 214 residues long: Ribonuclease HII (214 aa).

Residues 18–208 (SRVVGVDEVG…SLLPSEAHLC (191 aa)) form the RNase H type-2 domain. Residues D24, E25, and D116 each contribute to the a divalent metal cation site.

Belongs to the RNase HII family. The cofactor is Mn(2+). Mg(2+) is required as a cofactor.

Its subcellular location is the cytoplasm. It catalyses the reaction Endonucleolytic cleavage to 5'-phosphomonoester.. Functionally, endonuclease that specifically degrades the RNA of RNA-DNA hybrids. The polypeptide is Ribonuclease HII (Thermosynechococcus vestitus (strain NIES-2133 / IAM M-273 / BP-1)).